The chain runs to 367 residues: 2-aminoethylphosphonate--pyruvate transaminase (367 aa).

Lysine 194 bears the N6-(pyridoxal phosphate)lysine mark.

This sequence belongs to the class-V pyridoxal-phosphate-dependent aminotransferase family. PhnW subfamily. In terms of assembly, homodimer. It depends on pyridoxal 5'-phosphate as a cofactor.

The enzyme catalyses (2-aminoethyl)phosphonate + pyruvate = phosphonoacetaldehyde + L-alanine. Involved in phosphonate degradation. In Salmonella dublin (strain CT_02021853), this protein is 2-aminoethylphosphonate--pyruvate transaminase.